Here is a 332-residue protein sequence, read N- to C-terminus: Methionine synthase (332 aa).

The Zn(2+) site is built by His211, Cys213, and Cys296.

The protein belongs to the archaeal MetE family. Zn(2+) serves as cofactor.

The protein operates within amino-acid biosynthesis; L-methionine biosynthesis via de novo pathway. In terms of biological role, catalyzes the transfer of a methyl group to L-homocysteine resulting in methionine formation. The physiological methyl donor is unknown. In Saccharolobus islandicus (strain L.S.2.15 / Lassen #1) (Sulfolobus islandicus), this protein is Methionine synthase.